Here is a 37-residue protein sequence, read N- to C-terminus: Large ribosomal subunit protein bL36 (37 aa).

Belongs to the bacterial ribosomal protein bL36 family.

In Leptothrix cholodnii (strain ATCC 51168 / LMG 8142 / SP-6) (Leptothrix discophora (strain SP-6)), this protein is Large ribosomal subunit protein bL36.